A 278-amino-acid polypeptide reads, in one-letter code: Potassium/proton antiporter CemA (278 aa).

Helical transmembrane passes span 60–80 (YLVL…SLVF), 163–183 (ILAF…IAVL), 201–221 (FLII…GWEV), and 239–259 (IFLF…YWIF).

It belongs to the CemA family.

The protein resides in the plastid. It localises to the chloroplast inner membrane. It catalyses the reaction K(+)(in) + H(+)(out) = K(+)(out) + H(+)(in). Contributes to K(+)/H(+) antiport activity by supporting proton efflux to control proton extrusion and homeostasis in chloroplasts in a light-dependent manner to modulate photosynthesis. Prevents excessive induction of non-photochemical quenching (NPQ) under continuous-light conditions. Indirectly promotes efficient inorganic carbon uptake into chloroplasts. This is Potassium/proton antiporter CemA from Guillardia theta (Cryptophyte).